A 242-amino-acid polypeptide reads, in one-letter code: uncharacterized protein (242 aa).

Residues 17-85 form the HTH gntR-type domain; the sequence is QRVDERIATT…HGSGSVVRDP (69 aa). The segment at residues 45-64 is a DNA-binding region (H-T-H motif); that stretch reads ERDLAERLGVNRTSLRQGLA.

This is an uncharacterized protein from Mycobacterium tuberculosis (strain ATCC 25618 / H37Rv).